We begin with the raw amino-acid sequence, 540 residues long: MAKMLKFGEDARRSMQVGVDKLADTVKVTLGPKGRNVVLDKKFGSPLITNDGVSIAREIELEDPYENMGAQLVKEVATKTNDVAGDGTTTATLLAQAIIREGLKNVTAGANPMLIRNGIRMAVDKAVEEIKKISKPVEGKEDIARVAAISAADEEIGKLIADAMEKVGNEGVITIEESKSMGTELDVVEGMQFDRGYVSPYMSTDTEKMEAILDTPYILITDKKITNIQEILPILEQIVQAGRKLLIIAEDIEGEAMATLVVNKLRGTFTCVAVKAPGFGDRRKEMLEDIAILTGGTVIAEELGRDLKEVTLDMLGQAESVKVSKDNTVVVNGKGNPENIKDRISQIKAQIEETSSEFDKEKLQERLAKLAGGVAVIKVGAATETELKERKLRIEDALAATKAAVEEGIVPGGGTAYINVIKEVEKLTSDVQDTELGIKIIVKSLEEPLRQIASNAGVEGSVIIEKVKNSEVGTGYDALYGKYVNMIKSGIVDPTKVTRSALQNAASVSATFLTTEAAVAEIPQKEPAMPAPGMGMDGMY.

Residues 29 to 32 (TLGP), 86 to 90 (DGTTT), Gly-413, 477 to 479 (DAL), and Asp-493 contribute to the ATP site.

Belongs to the chaperonin (HSP60) family. As to quaternary structure, forms a cylinder of 14 subunits composed of two heptameric rings stacked back-to-back. Interacts with the co-chaperonin GroES.

The protein resides in the cytoplasm. It carries out the reaction ATP + H2O + a folded polypeptide = ADP + phosphate + an unfolded polypeptide.. In terms of biological role, together with its co-chaperonin GroES, plays an essential role in assisting protein folding. The GroEL-GroES system forms a nano-cage that allows encapsulation of the non-native substrate proteins and provides a physical environment optimized to promote and accelerate protein folding. This Clostridium botulinum (strain Eklund 17B / Type B) protein is Chaperonin GroEL.